The following is a 160-amino-acid chain: Monooxygenase AacuO (160 aa).

The protein belongs to the avfA family.

The protein operates within secondary metabolite biosynthesis. In terms of biological role, monooxygenase; part of the gene cluster that mediates the biosynthesis of the tetrahydroxanthone dimer secalonic acid D. The pathway begins with the synthesis of atrochrysone thioester by the polyketide synthase AacuL. The atrochrysone carboxyl ACP thioesterase AacuM then breaks the thioester bond and releases the atrochrysone carboxylic acid from AacuL. Atrochrysone carboxylic acid is decarboxylated by the decarboxylase AacuI, and oxidized by the anthrone oxygenase AacuG to yield emodin. Emodin is then reduced to emodin hydroquinone by a yet unidentified oxidoreductase. A-ring reduction by the short chain dehydrogenase AacuN, dehydration by the scytalone dehydratase-like protein AacuK and probable spontaneous re-oxidation, results in overall deoxygenation to chrysophanol. Baeyer-Villiger oxidation by the Baeyer-Villiger monooxygenase (BVMO) AacuH then yields monodictyphenone. Monodictyphenone is transformed into compounds with the tetrahydroxanthone skeleton via methylesterification by the methyltransferase AacuQ, followed by the action of the flavin-dependent monooxygenase AacuC, the isomerase AacuP, and the short chain dehydrogenase/reductase AacuF or AacuD. AacuF and AacuD should accept the same compound as a substrate but perform the ketoreduction with a different stereoselectivity, thus yielding blennolides B and A, respectively. In the final step of the biosynthesis, the cytochrome P450 monooxygenase AacuE accepts blennolide B and/or blennolide A to conduct the dimerization reaction to furnish the tetrahydroxanthone dimers, secalonic acids D, B, and F. The chain is Monooxygenase AacuO from Aspergillus aculeatus (strain ATCC 16872 / CBS 172.66 / WB 5094).